The following is a 232-amino-acid chain: C4-dicarboxylate TRAP transporter small permease protein DctQ (232 aa).

Transmembrane regions (helical) follow at residues 30–50 (EFLIAFFMGAMTLLTFANVIM), 58–78 (ILWALEGTVFMFAWMVLVGAS), 103–123 (LYALVAVACCLAFSILLLIGS), and 167–187 (FIPYAALPIGMALLTFRFLQI).

It belongs to the TRAP transporter small permease family. The complex comprises the extracytoplasmic solute receptor protein DctP, and the two transmembrane proteins DctQ and DctM.

It is found in the cell inner membrane. Part of the tripartite ATP-independent periplasmic (TRAP) transport system DctPQM involved in C4-dicarboxylates uptake. In Vibrio cholerae serotype O1 (strain ATCC 39315 / El Tor Inaba N16961), this protein is C4-dicarboxylate TRAP transporter small permease protein DctQ.